The following is a 916-amino-acid chain: Isoleucine--tRNA ligase (916 aa).

Positions 57 to 67 (PYANGNLHMGH) match the 'HIGH' region motif. E554 provides a ligand contact to L-isoleucyl-5'-AMP. A 'KMSKS' region motif is present at residues 595–599 (KMSKS). Position 598 (K598) interacts with ATP. C885, C888, C905, and C908 together coordinate Zn(2+).

Belongs to the class-I aminoacyl-tRNA synthetase family. IleS type 1 subfamily. As to quaternary structure, monomer. The cofactor is Zn(2+).

The protein localises to the cytoplasm. It catalyses the reaction tRNA(Ile) + L-isoleucine + ATP = L-isoleucyl-tRNA(Ile) + AMP + diphosphate. Catalyzes the attachment of isoleucine to tRNA(Ile). As IleRS can inadvertently accommodate and process structurally similar amino acids such as valine, to avoid such errors it has two additional distinct tRNA(Ile)-dependent editing activities. One activity is designated as 'pretransfer' editing and involves the hydrolysis of activated Val-AMP. The other activity is designated 'posttransfer' editing and involves deacylation of mischarged Val-tRNA(Ile). The sequence is that of Isoleucine--tRNA ligase from Staphylococcus epidermidis (strain ATCC 12228 / FDA PCI 1200).